Consider the following 126-residue polypeptide: Calcitonin receptor-stimulating peptide 1 (126 aa).

The N-terminal stretch at 1-25 (MGFWKFPPFLVLSILVLYQAGMFHT) is a signal peptide. The propeptide occupies 26-78 (APMRSAFGSPFDPATLSEEESRLLLAAMVNDYEQMKAREMQKQRAQGSGISVQ). Cysteines 82 and 87 form a disulfide. A Glycine amide modification is found at Gly-118. Residues 123-126 (NFWI) constitute a propeptide that is removed on maturation.

Mainly expressed in the thyroid gland and CNS. Found in the nerve cells of cerebrum, hippocampus, hypothalamus, pons/midbrain and thalamus.

It localises to the secreted. Its function is as follows. Stimulates cAMP production in porcine kidney cell line LLC-PK1 via the calcitonin receptor (CT) but not via the CT-like (CL) receptor. In Sus scrofa (Pig), this protein is Calcitonin receptor-stimulating peptide 1 (CRSP1).